A 124-amino-acid chain; its full sequence is Glycine cleavage system H protein (124 aa).

The 83-residue stretch at 19–101 folds into the Lipoyl-binding domain; sequence VATVGITDHA…ESGAWFFRMT (83 aa). Lysine 60 is modified (N6-lipoyllysine).

The protein belongs to the GcvH family. As to quaternary structure, the glycine cleavage system is composed of four proteins: P, T, L and H. (R)-lipoate serves as cofactor.

The glycine cleavage system catalyzes the degradation of glycine. The H protein shuttles the methylamine group of glycine from the P protein to the T protein. The protein is Glycine cleavage system H protein of Acidiphilium cryptum (strain JF-5).